The chain runs to 180 residues: Fucolectin-2 (180 aa).

Residues 1–22 (MKVKMIMLLFQILAILTLKSDS) form the signal peptide. The F5/8 type C-like stretch occupies residues 31-179 (QENVALRGRA…VEVNVLFPAP (149 aa)). The Ca(2+) site is built by Asn58, Asp61, Asn63, and Ser72. Intrachain disulfides connect Cys73–Cys168, Cys104–Cys105, and Cys130–Cys146. Alpha-L-fucose is bound by residues His75 and Arg101. The Cell attachment site motif lies at 101-103 (RGD). Arg108 is a binding site for alpha-L-fucose. Cys168 and Glu169 together coordinate Ca(2+).

Belongs to the fucolectin family. Homotrimer. As to expression, parenchymal hepatocytes.

Its subcellular location is the secreted. It is found in the extracellular space. In terms of biological role, acts as a defensive agent. Recognizes blood group fucosylated oligosaccharides including A, B, H and Lewis B-type antigens. Does not recognize Lewis A antigen and has low affinity for monovalent haptens. This is Fucolectin-2 from Anguilla japonica (Japanese eel).